The chain runs to 311 residues: Tricarboxylate transport protein, mitochondrial (311 aa).

The propeptide at 1–13 (MAAPRAPRALTAA) is removed in mature form. 3 Solcar repeats span residues 23–111 (THPG…LSNH), 122–208 (RRGL…LRNW), and 218–303 (MNPL…VVKL). A run of 3 helical transmembrane segments spans residues 29-46 (ILAGGLAGGIEICITFPT), 86-105 (GLSSLLYGSIPKAAVRFGMF), and 129-143 (LGAGVAEAVVVVCPM). At Ser156 the chain carries Phosphoserine. The next 3 membrane-spanning stretches (helical) occupy residues 183 to 202 (GLTATVLKQGSNQAIRFFVM), 224 to 241 (GVFGAVAGAASVFGNTPL), and 278 to 297 (GTVPRLGRVCLDVAIVFVIY).

Belongs to the mitochondrial carrier (TC 2.A.29) family. Possesses a short cleavable presequence, which, however, is found to be dispensable both for targeting to mitochondria and insertion into the inner membrane. However, the presequence is required to keep SLC25A1 in a soluble state and thus in an import-competent state. Mature SLC25A1 lacking the presequence is prone to aggregation.

The protein localises to the mitochondrion inner membrane. It carries out the reaction (S)-malate(in) + citrate(out) = (S)-malate(out) + citrate(in). The enzyme catalyses citrate(out) + succinate(in) = citrate(in) + succinate(out). It catalyses the reaction D-threo-isocitrate(in) + citrate(out) = D-threo-isocitrate(out) + citrate(in). The catalysed reaction is cis-aconitate(in) + citrate(out) = cis-aconitate(out) + citrate(in). It carries out the reaction trans-aconitate(in) + citrate(out) = trans-aconitate(out) + citrate(in). The enzyme catalyses phosphoenolpyruvate(in) + citrate(out) = phosphoenolpyruvate(out) + citrate(in). It catalyses the reaction maleate(in) + citrate(out) = maleate(out) + citrate(in). In terms of biological role, mitochondrial electroneutral antiporter that exports citrate from the mitochondria into the cytosol in exchange for malate. Also able to mediate the exchange of citrate for isocitrate, phosphoenolpyruvate, cis-aconitate and to a lesser extent trans-aconitate, maleate and succinate. In the cytoplasm, citrate plays important roles in fatty acid and sterol synthesis, regulation of glycolysis, protein acetylation, and other physiopathological processes. The chain is Tricarboxylate transport protein, mitochondrial (Slc25a1) from Rattus norvegicus (Rat).